Here is a 20-residue protein sequence, read N- to C-terminus: Non-specific lipid-transfer protein (20 aa).

It belongs to the plant LTP family. Leaf.

Plant non-specific lipid-transfer proteins transfer phospholipids as well as galactolipids across membranes. May play a role in wax or cutin deposition in the cell walls of expanding epidermal cells and certain secretory tissues. This chain is Non-specific lipid-transfer protein, found in Cannabis sativa (Hemp).